The chain runs to 430 residues: Aspartate aminotransferase, mitochondrial (430 aa).

The transit peptide at 1-29 (MALLHSGRVLSGMAAAFHPGLAAAASARA) directs the protein to the mitochondrion. Thr-48 carries the phosphothreonine modification. N6-acetyllysine is present on Lys-59. Gly-65 serves as a coordination point for substrate. Lys-73 carries the N6-acetyllysine; alternate modification. At Lys-73 the chain carries N6-succinyllysine; alternate. Lys-82 is subject to N6-acetyllysine. Lys-90 carries the post-translational modification N6-acetyllysine; alternate. The residue at position 90 (Lys-90) is an N6-succinyllysine; alternate. Tyr-96 carries the post-translational modification 3'-nitrotyrosine; alternate. Tyr-96 carries the phosphotyrosine; alternate modification. An N6-acetyllysine; alternate mark is found at Lys-107 and Lys-122. 2 positions are modified to N6-succinyllysine; alternate: Lys-107 and Lys-122. A Phosphoserine modification is found at Ser-143. Lys-159 carries the post-translational modification N6-acetyllysine; alternate. Residue Lys-159 is modified to N6-succinyllysine; alternate. Trp-162 contributes to the substrate binding site. The residue at position 185 (Lys-185) is an N6-acetyllysine; alternate. Position 185 is an N6-succinyllysine; alternate (Lys-185). Asn-215 is a substrate binding site. Lys-227 carries the post-translational modification N6-succinyllysine. Residue Lys-234 is modified to N6-acetyllysine. Lys-279 and Lys-296 each carry N6-acetyllysine; alternate. The residue at position 279 (Lys-279) is an N6-(pyridoxal phosphate)lysine; alternate. The residue at position 296 (Lys-296) is an N6-succinyllysine; alternate. The residue at position 302 (Lys-302) is an N6-acetyllysine. Position 309 is an N6-acetyllysine; alternate (Lys-309). Lys-309 carries the post-translational modification N6-succinyllysine; alternate. Asymmetric dimethylarginine is present on Arg-313. Lys-338 carries the post-translational modification N6-acetyllysine; alternate. Lys-338 carries the post-translational modification N6-succinyllysine; alternate. Lys-345 carries the N6-acetyllysine modification. Lys-363 is modified (N6-acetyllysine; alternate). Lys-363 is subject to N6-succinyllysine; alternate. An N6-acetyllysine mark is found at Lys-364 and Lys-387. N6-acetyllysine; alternate is present on residues Lys-396 and Lys-404. Lys-396 and Lys-404 each carry N6-succinyllysine; alternate. Residue Arg-407 coordinates substrate.

Belongs to the class-I pyridoxal-phosphate-dependent aminotransferase family. As to quaternary structure, homodimer. It depends on pyridoxal 5'-phosphate as a cofactor. As to expression, expressed in all tissues tested: liver, pancreas, kidney, heart, spleen, arterioles, and lymphocytes.

Its subcellular location is the mitochondrion matrix. It localises to the cell membrane. It carries out the reaction L-aspartate + 2-oxoglutarate = oxaloacetate + L-glutamate. The catalysed reaction is L-kynurenine + 2-oxoglutarate = kynurenate + L-glutamate + H2O. Its function is as follows. Catalyzes the irreversible transamination of the L-tryptophan metabolite L-kynurenine to form kynurenic acid (KA). As a member of the malate-aspartate shuttle, it has a key role in the intracellular NAD(H) redox balance. Is important for metabolite exchange between mitochondria and cytosol, and for amino acid metabolism. Facilitates cellular uptake of long-chain free fatty acids. In Rattus norvegicus (Rat), this protein is Aspartate aminotransferase, mitochondrial (Got2).